The primary structure comprises 132 residues: Small ribosomal subunit protein uS8 (132 aa).

Belongs to the universal ribosomal protein uS8 family. Part of the 30S ribosomal subunit. Contacts proteins S5 and S12.

In terms of biological role, one of the primary rRNA binding proteins, it binds directly to 16S rRNA central domain where it helps coordinate assembly of the platform of the 30S subunit. This is Small ribosomal subunit protein uS8 from Geotalea daltonii (strain DSM 22248 / JCM 15807 / FRC-32) (Geobacter daltonii).